Consider the following 466-residue polypeptide: ATP-dependent protease ATPase subunit HslU (466 aa).

Residues isoleucine 18, 60–65 (GVGKTE), aspartate 279, glutamate 344, and arginine 416 contribute to the ATP site.

The protein belongs to the ClpX chaperone family. HslU subfamily. As to quaternary structure, a double ring-shaped homohexamer of HslV is capped on each side by a ring-shaped HslU homohexamer. The assembly of the HslU/HslV complex is dependent on binding of ATP.

The protein resides in the cytoplasm. Its function is as follows. ATPase subunit of a proteasome-like degradation complex; this subunit has chaperone activity. The binding of ATP and its subsequent hydrolysis by HslU are essential for unfolding of protein substrates subsequently hydrolyzed by HslV. HslU recognizes the N-terminal part of its protein substrates and unfolds these before they are guided to HslV for hydrolysis. The polypeptide is ATP-dependent protease ATPase subunit HslU (Syntrophomonas wolfei subsp. wolfei (strain DSM 2245B / Goettingen)).